The sequence spans 172 residues: 3-hydroxydecanoyl-[acyl-carrier-protein] dehydratase (172 aa).

His-71 is an active-site residue.

This sequence belongs to the thioester dehydratase family. FabA subfamily. Homodimer.

Its subcellular location is the cytoplasm. It catalyses the reaction a (3R)-hydroxyacyl-[ACP] = a (2E)-enoyl-[ACP] + H2O. The catalysed reaction is (3R)-hydroxydecanoyl-[ACP] = (2E)-decenoyl-[ACP] + H2O. It carries out the reaction (2E)-decenoyl-[ACP] = (3Z)-decenoyl-[ACP]. Its pathway is lipid metabolism; fatty acid biosynthesis. In terms of biological role, necessary for the introduction of cis unsaturation into fatty acids. Catalyzes the dehydration of (3R)-3-hydroxydecanoyl-ACP to E-(2)-decenoyl-ACP and then its isomerization to Z-(3)-decenoyl-ACP. Can catalyze the dehydratase reaction for beta-hydroxyacyl-ACPs with saturated chain lengths up to 16:0, being most active on intermediate chain length. This Yersinia pseudotuberculosis serotype O:1b (strain IP 31758) protein is 3-hydroxydecanoyl-[acyl-carrier-protein] dehydratase.